The sequence spans 475 residues: Methyltransferase-like protein 25B (475 aa).

A coiled-coil region spans residues 186–210 (QRLVERAQRLDQELLQTLEKEEKRN). The helical transmembrane segment at 406 to 426 (VVAFFSLALLLAPLVETLILL) threads the bilayer.

It belongs to the METTL25 family.

The protein resides in the membrane. This chain is Methyltransferase-like protein 25B, found in Bos taurus (Bovine).